Consider the following 352-residue polypeptide: N-acetyl-gamma-glutamyl-phosphate reductase (352 aa).

Residue C156 is part of the active site.

It belongs to the NAGSA dehydrogenase family. Type 1 subfamily.

The protein localises to the cytoplasm. It carries out the reaction N-acetyl-L-glutamate 5-semialdehyde + phosphate + NADP(+) = N-acetyl-L-glutamyl 5-phosphate + NADPH + H(+). Its pathway is amino-acid biosynthesis; L-arginine biosynthesis; N(2)-acetyl-L-ornithine from L-glutamate: step 3/4. In terms of biological role, catalyzes the NADPH-dependent reduction of N-acetyl-5-glutamyl phosphate to yield N-acetyl-L-glutamate 5-semialdehyde. The protein is N-acetyl-gamma-glutamyl-phosphate reductase of Rhodospirillum rubrum (strain ATCC 11170 / ATH 1.1.1 / DSM 467 / LMG 4362 / NCIMB 8255 / S1).